We begin with the raw amino-acid sequence, 855 residues long: DNA mismatch repair protein MutS (855 aa).

617–624 (GPNMGGKS) is a binding site for ATP.

The protein belongs to the DNA mismatch repair MutS family.

Its function is as follows. This protein is involved in the repair of mismatches in DNA. It is possible that it carries out the mismatch recognition step. This protein has a weak ATPase activity. This Baumannia cicadellinicola subsp. Homalodisca coagulata protein is DNA mismatch repair protein MutS.